A 262-amino-acid chain; its full sequence is MYLLIVFLSMLSSSVAGFFGRFLGSESVSRFNLIIFLILLVFSICLFRSLKQYLGKRMTQWCYLALVCQISLFLVLLRSHILAGFGTFSADVFTVFMGTFSVTGSSGGIVNHQDGASSEWFTYTSDMVEDSASSGRTSSSVNQPIPEEQAWEREARAQEHDRISAEVETITSACENLEAAMVRKAQILLHQRGVTLGDPEDVKRALQLALHDDWEHAIDDRKRHFTVLRRNFGTARCERWNPFIDELRGLGNHQVNARHYVD.

Helical transmembrane passes span 4–24 (LIVF…RFLG), 28–48 (VSRF…CLFR), and 62–82 (CYLA…SHIL). A coiled-coil region spans residues 152–181 (EREARAQEHDRISAEVETITSACENLEAAM).

It localises to the mitochondrion membrane. This is an uncharacterized protein from Arabidopsis thaliana (Mouse-ear cress).